A 126-amino-acid chain; its full sequence is Ribonuclease P protein component (126 aa).

This sequence belongs to the RnpA family. Consists of a catalytic RNA component (M1 or rnpB) and a protein subunit.

It carries out the reaction Endonucleolytic cleavage of RNA, removing 5'-extranucleotides from tRNA precursor.. RNaseP catalyzes the removal of the 5'-leader sequence from pre-tRNA to produce the mature 5'-terminus. It can also cleave other RNA substrates such as 4.5S RNA. The protein component plays an auxiliary but essential role in vivo by binding to the 5'-leader sequence and broadening the substrate specificity of the ribozyme. This Brevibacillus brevis (strain 47 / JCM 6285 / NBRC 100599) protein is Ribonuclease P protein component.